Reading from the N-terminus, the 392-residue chain is N-acyl-phosphatidylethanolamine-hydrolyzing phospholipase D (392 aa).

M1 is subject to N-acetylmethionine. The segment covering 1-16 has biased composition (polar residues); that stretch reads MDENETNQLLMTSNQY. A disordered region spans residues 1–39; that stretch reads MDENETNQLLMTSNQYPKEAVRKRQNSRNSGGSDSSRFS. Residues 27-36 show a composition bias toward low complexity; it reads SRNSGGSDSS. Zn(2+) is bound by residues H183 and H185. Y186 provides a ligand contact to an N-acyl-1,2-diacyl-sn-glycero-3-phosphoethanolamine. D187, H188, and H251 together coordinate Zn(2+). The deoxycholate site is built by K254 and M258. D282 is a binding site for Zn(2+). H319 is a binding site for an N-acyl-1,2-diacyl-sn-glycero-3-phosphoethanolamine. A Zn(2+)-binding site is contributed by H341. A deoxycholate-binding site is contributed by A346.

Belongs to the NAPE-PLD family. As to quaternary structure, homodimer. Bile acids promote the assembly of inactive monomers into an active dimer and enable catalysis. It depends on Zn(2+) as a cofactor. As to expression, widely expressed. Highest expression in brain, kidney and testis (at protein level). Expressed in adipose tissue (at protein level).

Its subcellular location is the golgi apparatus membrane. The protein resides in the early endosome membrane. The protein localises to the nucleus envelope. It is found in the nucleus. It localises to the nucleoplasm. The catalysed reaction is an N-acyl-1,2-diacyl-sn-glycero-3-phosphoethanolamine + H2O = an N-acylethanolamine + a 1,2-diacyl-sn-glycero-3-phosphate + H(+). It catalyses the reaction N-butanoyl-1-hexadecanoyl-2-(9Z,12Z-octadecadienoyl)-sn-glycero-3-phosphoethanolamine + H2O = N-butanoyl ethanolamine + 1-hexadecanoyl-2-(9Z,12Z-octadecadienoyl)-sn-glycero-3-phosphate + H(+). The enzyme catalyses N-hexanoyl-1-hexadecanoyl-2-(9Z,12Z-octadecadienoyl)-sn-glycero-3-phosphoethanolamine + H2O = N-hexanoyl ethanolamine + 1-hexadecanoyl-2-(9Z,12Z-octadecadienoyl)-sn-glycero-3-phosphate + H(+). It carries out the reaction N-octanoyl-1-hexadecanoyl-2-(9Z,12Z-octadecadienoyl)-sn-glycero-3-phosphoethanolamine + H2O = N-octanoyl ethanolamine + 1-hexadecanoyl-2-(9Z,12Z-octadecadienoyl)-sn-glycero-3-phosphate + H(+). The catalysed reaction is N-decanoyl-1-hexadecanoyl-2-(9Z,12Z-octadecadienoyl)-sn-glycero-3-phosphoethanolamine + H2O = N-decanoyl ethanolamine + 1-hexadecanoyl-2-(9Z,12Z-octadecadienoyl)-sn-glycero-3-phosphate + H(+). It catalyses the reaction N-dodecanoyl-1,2-di-(9Z-octadecenoyl)-sn-glycero-3-phosphoethanolamine + H2O = N-dodecanoylethanolamine + 1,2-di-(9Z-octadecenoyl)-sn-glycero-3-phosphate + H(+). The enzyme catalyses N-tetradecanoyl-1,2-di-(9Z-octadecenoyl)-sn-glycero-3-phosphoethanolamine + H2O = N-tetradecanoylethanolamine + 1,2-di-(9Z-octadecenoyl)-sn-glycero-3-phosphate + H(+). It carries out the reaction N-hexadecanoyl-1,2-di-(9Z-octadecenoyl)-sn-glycero-3-phosphoethanolamine + H2O = N-hexadecanoylethanolamine + 1,2-di-(9Z-octadecenoyl)-sn-glycero-3-phosphate + H(+). The catalysed reaction is N,1-dihexadecanoyl-2-(9Z,12Z-octadecadienoyl)-sn-glycero-3-phosphoethanolamine + H2O = 1-hexadecanoyl-2-(9Z,12Z-octadecadienoyl)-sn-glycero-3-phosphate + N-hexadecanoylethanolamine + H(+). It catalyses the reaction N-octadecanoyl-1,2-di-(9Z-octadecenoyl)-sn-glycero-3-phosphoethanolamine + H2O = N-octadecanoyl ethanolamine + 1,2-di-(9Z-octadecenoyl)-sn-glycero-3-phosphate + H(+). The enzyme catalyses N,1,2-tri-(9Z-octadecenoyl)-sn-glycero-3-phosphoethanolamine + H2O = N-(9Z-octadecenoyl) ethanolamine + 1,2-di-(9Z-octadecenoyl)-sn-glycero-3-phosphate + H(+). It carries out the reaction N-(5Z,8Z,11Z,14Z-eicosatetraenoyl)-1,2-diacyl-sn-glycero-3-phosphoethanolamine + H2O = N-(5Z,8Z,11Z,14Z-eicosatetraenoyl)-ethanolamine + a 1,2-diacyl-sn-glycero-3-phosphate + H(+). The catalysed reaction is N-(5Z,8Z,11Z,14Z-eicosatetraenoyl)-1,2-di-(9Z-octadecenoyl)-sn-glycero-3-phosphoethanolamine + H2O = N-(5Z,8Z,11Z,14Z-eicosatetraenoyl)-ethanolamine + 1,2-di-(9Z-octadecenoyl)-sn-glycero-3-phosphate + H(+). It catalyses the reaction 1-O-(1Z-octadecenoyl)-2-(9Z-octadecenoyl)-sn-glycero-3-phospho-N-hexadecanoyl-ethanolamine + H2O = 1-O-(1Z-octadecenoyl)-2-(9Z-octadecenoyl)-sn-glycero-3-phosphate + N-hexadecanoylethanolamine + H(+). The enzyme catalyses N,1-diacyl-sn-glycero-3-phosphoethanolamine + H2O = an N-acylethanolamine + a 1-acyl-sn-glycero-3-phosphate + H(+). It carries out the reaction N,1-dihexadecanoyl-sn-glycero-3-phosphoethanolamine + H2O = N-hexadecanoylethanolamine + 1-hexadecanoyl-sn-glycero-3-phosphate + H(+). The catalysed reaction is N-(5Z,8Z,11Z,14Z-eicosatetraenoyl)-1-(9Z-octadecenoyl)-sn-glycero-3-phosphoethanolamine + H2O = N-(5Z,8Z,11Z,14Z-eicosatetraenoyl)-ethanolamine + 1-(9Z-octadecenoyl)-sn-glycero-3-phosphate + H(+). Its activity is regulated as follows. Activated by divalent cations. Activated by bile acids. In terms of biological role, D-type phospholipase that hydrolyzes N-acyl-phosphatidylethanolamines (NAPEs) to produce bioactive N-acylethanolamines/fatty acid ethanolamides (NAEs/FAEs) and phosphatidic acid. Cleaves the terminal phosphodiester bond of diacyl- and alkenylacyl-NAPEs, primarily playing a role in the generation of long-chain saturated and monounsaturated NAEs in the brain. May control NAPE homeostasis in dopaminergic neuron membranes and regulate neuron survival, partly through RAC1 activation. As a regulator of lipid metabolism in the adipose tissue, mediates the crosstalk between adipocytes, gut microbiota and immune cells to control body temperature and weight. In particular, regulates energy homeostasis by promoting cold-induced brown or beige adipocyte differentiation program to generate heat from fatty acids and glucose. Has limited D-type phospholipase activity toward N-acyl lyso-NAPEs. The polypeptide is N-acyl-phosphatidylethanolamine-hydrolyzing phospholipase D (NAPEPLD) (Bos taurus (Bovine)).